The sequence spans 264 residues: MDTRPIGFLDSGVGGLTVVCELIRQLPHEKIVYIGDSARAPYGPRPKKQIKEYTWELVNFLLTQNVKMIVFACNTATAVAWEEVKAALDIPVLGVVLPGASAAIKSTTKGQVGVIGTPMTVASDIYRKKIQLLAPSIQVRSLACPKFVPIVESNEMCSSIAKKIVYDSLAPLVGKIDTLVLGCTHYPLLRPIIQNVMGPSVKLIDSGAECVRDISVLLNYFDINGNYHQKAVKHRFFTTANPEIFQEIASIWLKQKINVEHVTL.

Substrate contacts are provided by residues 10-11 (DS) and 42-43 (YG). Cys73 acts as the Proton donor/acceptor in catalysis. 74 to 75 (NT) is a substrate binding site. Cys183 (proton donor/acceptor) is an active-site residue. 184 to 185 (TH) provides a ligand contact to substrate.

It belongs to the aspartate/glutamate racemases family.

The catalysed reaction is L-glutamate = D-glutamate. It participates in cell wall biogenesis; peptidoglycan biosynthesis. Functionally, provides the (R)-glutamate required for cell wall biosynthesis. This chain is Glutamate racemase, found in Streptococcus pyogenes serotype M49 (strain NZ131).